Consider the following 637-residue polypeptide: Pyrethroid hydrolase (637 aa).

The enzyme catalyses (-)-trans-permethrin + H2O = (3-phenoxyphenyl)methanol + (1S,3R)-3-(2,2-dichlorovinyl)-2,2-dimethylcyclopropanecarboxylate + H(+). Inhibited by Hg(2+), Ag(+) and rho-chloromercuribenzoate. Functionally, catalyzes the hydrolysis of pyrethroids pesticides. Hydrolyzes cis-permethrin at approximately equal rate to trans-permethrin. The chain is Pyrethroid hydrolase (estP) from Klebsiella sp.